We begin with the raw amino-acid sequence, 129 residues long: D-ribose pyranase (129 aa).

The active-site Proton donor is His20. Residues Asp28, His96, and 118 to 120 contribute to the substrate site; that span reads YAN.

The protein belongs to the RbsD / FucU family. RbsD subfamily. In terms of assembly, homodecamer.

The protein localises to the cytoplasm. It catalyses the reaction beta-D-ribopyranose = beta-D-ribofuranose. The protein operates within carbohydrate metabolism; D-ribose degradation; D-ribose 5-phosphate from beta-D-ribopyranose: step 1/2. In terms of biological role, catalyzes the interconversion of beta-pyran and beta-furan forms of D-ribose. The chain is D-ribose pyranase from Exiguobacterium sibiricum (strain DSM 17290 / CCUG 55495 / CIP 109462 / JCM 13490 / 255-15).